We begin with the raw amino-acid sequence, 732 residues long: Acylamino-acid-releasing enzyme (732 aa).

Residue Met-1 is modified to N-acetylmethionine. Phosphoserine is present on residues Ser-185 and Ser-187. Active-site charge relay system residues include Ser-587, Asp-675, and His-707.

This sequence belongs to the peptidase S9C family. Homotetramer.

Its subcellular location is the cytoplasm. It carries out the reaction Cleavage of an N-acetyl or N-formyl amino acid from the N-terminus of a polypeptide.. With respect to regulation, homotetramerization is required for activity. Tetramerization results in the formation of a gated channel which is involved in substrate selection and substrate access to the catalytic sites. In terms of biological role, this enzyme catalyzes the hydrolysis of the N-terminal peptide bond of an N-acetylated peptide to generate an N-acetylated amino acid and a peptide with a free N-terminus. It preferentially cleaves off Ac-Ala, Ac-Met and Ac-Ser. Also, involved in the degradation of oxidized and glycated proteins. This Mus musculus (Mouse) protein is Acylamino-acid-releasing enzyme (Apeh).